Consider the following 333-residue polypeptide: MNTADKRLDEILLAEPRGFCAGVDRAIEIVERALTKFGAPIYVRHEIVHNTYVVNELKAKGAIFIEELSDVPPGATLVFSAHGVSKAIQDEARARGFQIFDATCPLVTKVHVEVAKLHKEGYEFIMIGHKGHPEVEGTMGQLDSGIHLVEDVADVARITPSQTERLAVVTQTTLSVDDAAEISAAVKARFPQVREPKQQDICYATQNRQDAVKVLSPQVDILIVVGSPTSSNSNRLRELAAKLGTEAYMVDDASELRESWFEGKSRVGLTAGASAPEILVKQVIDRIRALGAVSVRKMDGIEETIKFPLPKGLKVDAQGHMLDVGDSQLHQLT.

Position 20 (C20) interacts with [4Fe-4S] cluster. Residues H49 and H82 each contribute to the (2E)-4-hydroxy-3-methylbut-2-enyl diphosphate site. 2 residues coordinate dimethylallyl diphosphate: H49 and H82. Residues H49 and H82 each coordinate isopentenyl diphosphate. C104 serves as a coordination point for [4Fe-4S] cluster. Residue H132 coordinates (2E)-4-hydroxy-3-methylbut-2-enyl diphosphate. Dimethylallyl diphosphate is bound at residue H132. H132 lines the isopentenyl diphosphate pocket. E134 serves as the catalytic Proton donor. T172 contributes to the (2E)-4-hydroxy-3-methylbut-2-enyl diphosphate binding site. C202 is a [4Fe-4S] cluster binding site. The (2E)-4-hydroxy-3-methylbut-2-enyl diphosphate site is built by S230, S231, N232, and S274. Residues S230, S231, N232, and S274 each contribute to the dimethylallyl diphosphate site. 4 residues coordinate isopentenyl diphosphate: S230, S231, N232, and S274.

This sequence belongs to the IspH family. Requires [4Fe-4S] cluster as cofactor.

It catalyses the reaction isopentenyl diphosphate + 2 oxidized [2Fe-2S]-[ferredoxin] + H2O = (2E)-4-hydroxy-3-methylbut-2-enyl diphosphate + 2 reduced [2Fe-2S]-[ferredoxin] + 2 H(+). It carries out the reaction dimethylallyl diphosphate + 2 oxidized [2Fe-2S]-[ferredoxin] + H2O = (2E)-4-hydroxy-3-methylbut-2-enyl diphosphate + 2 reduced [2Fe-2S]-[ferredoxin] + 2 H(+). It functions in the pathway isoprenoid biosynthesis; dimethylallyl diphosphate biosynthesis; dimethylallyl diphosphate from (2E)-4-hydroxy-3-methylbutenyl diphosphate: step 1/1. The protein operates within isoprenoid biosynthesis; isopentenyl diphosphate biosynthesis via DXP pathway; isopentenyl diphosphate from 1-deoxy-D-xylulose 5-phosphate: step 6/6. Functionally, catalyzes the conversion of 1-hydroxy-2-methyl-2-(E)-butenyl 4-diphosphate (HMBPP) into a mixture of isopentenyl diphosphate (IPP) and dimethylallyl diphosphate (DMAPP). Acts in the terminal step of the DOXP/MEP pathway for isoprenoid precursor biosynthesis. The polypeptide is 4-hydroxy-3-methylbut-2-enyl diphosphate reductase (Polaromonas sp. (strain JS666 / ATCC BAA-500)).